A 144-amino-acid polypeptide reads, in one-letter code: Large ribosomal subunit protein uL13 (144 aa).

Belongs to the universal ribosomal protein uL13 family. As to quaternary structure, part of the 50S ribosomal subunit.

This protein is one of the early assembly proteins of the 50S ribosomal subunit, although it is not seen to bind rRNA by itself. It is important during the early stages of 50S assembly. In Legionella pneumophila (strain Paris), this protein is Large ribosomal subunit protein uL13.